A 286-amino-acid polypeptide reads, in one-letter code: Glycine--tRNA ligase alpha subunit (286 aa).

It belongs to the class-II aminoacyl-tRNA synthetase family. In terms of assembly, tetramer of two alpha and two beta subunits.

The protein localises to the cytoplasm. It catalyses the reaction tRNA(Gly) + glycine + ATP = glycyl-tRNA(Gly) + AMP + diphosphate. The sequence is that of Glycine--tRNA ligase alpha subunit from Thermotoga petrophila (strain ATCC BAA-488 / DSM 13995 / JCM 10881 / RKU-1).